The following is a 233-amino-acid chain: Ribulose-phosphate 3-epimerase (233 aa).

S16 is a binding site for substrate. H41, D43, and H74 together coordinate a divalent metal cation. The Proton acceptor role is filled by D43. Substrate-binding positions include H74, 150–153, 185–187, and 207–208; these read GFCG, DGG, and AS. An a divalent metal cation-binding site is contributed by D185. D185 acts as the Proton donor in catalysis.

This sequence belongs to the ribulose-phosphate 3-epimerase family. The cofactor is a divalent metal cation.

The catalysed reaction is D-ribulose 5-phosphate = D-xylulose 5-phosphate. Its pathway is carbohydrate degradation. Functionally, catalyzes the reversible epimerization of D-ribulose 5-phosphate to D-xylulose 5-phosphate. The chain is Ribulose-phosphate 3-epimerase from Chlamydia trachomatis serovar D (strain ATCC VR-885 / DSM 19411 / UW-3/Cx).